The sequence spans 1291 residues: DNA-directed RNA polymerase subunit beta' (1291 aa).

Residues C60, C62, C75, and C78 each coordinate Zn(2+). Mg(2+) contacts are provided by D535, D537, and D539. C878, C954, C961, and C964 together coordinate Zn(2+).

The protein belongs to the RNA polymerase beta' chain family. As to quaternary structure, the RNAP catalytic core consists of 2 alpha, 1 beta, 1 beta' and 1 omega subunit. When a sigma factor is associated with the core the holoenzyme is formed, which can initiate transcription. The cofactor is Mg(2+). It depends on Zn(2+) as a cofactor.

It carries out the reaction RNA(n) + a ribonucleoside 5'-triphosphate = RNA(n+1) + diphosphate. DNA-dependent RNA polymerase catalyzes the transcription of DNA into RNA using the four ribonucleoside triphosphates as substrates. The chain is DNA-directed RNA polymerase subunit beta' from Thermobifida fusca (strain YX).